A 372-amino-acid polypeptide reads, in one-letter code: Queuine tRNA-ribosyltransferase (372 aa).

The active-site Proton acceptor is the aspartate 92. Substrate contacts are provided by residues 92 to 96, aspartate 146, glutamine 188, and glycine 215; that span reads DSGGF. Positions 246–252 are RNA binding; sequence GIGTLRE. The active-site Nucleophile is the aspartate 265. The RNA binding; important for wobble base 34 recognition stretch occupies residues 270-274; the sequence is TRLGR. Residues cysteine 303, cysteine 305, cysteine 308, and histidine 334 each contribute to the Zn(2+) site.

The protein belongs to the queuine tRNA-ribosyltransferase family. In terms of assembly, homodimer. Within each dimer, one monomer is responsible for RNA recognition and catalysis, while the other monomer binds to the replacement base PreQ1. Zn(2+) is required as a cofactor.

It catalyses the reaction 7-aminomethyl-7-carbaguanine + guanosine(34) in tRNA = 7-aminomethyl-7-carbaguanosine(34) in tRNA + guanine. Its pathway is tRNA modification; tRNA-queuosine biosynthesis. Catalyzes the base-exchange of a guanine (G) residue with the queuine precursor 7-aminomethyl-7-deazaguanine (PreQ1) at position 34 (anticodon wobble position) in tRNAs with GU(N) anticodons (tRNA-Asp, -Asn, -His and -Tyr). Catalysis occurs through a double-displacement mechanism. The nucleophile active site attacks the C1' of nucleotide 34 to detach the guanine base from the RNA, forming a covalent enzyme-RNA intermediate. The proton acceptor active site deprotonates the incoming PreQ1, allowing a nucleophilic attack on the C1' of the ribose to form the product. After dissociation, two additional enzymatic reactions on the tRNA convert PreQ1 to queuine (Q), resulting in the hypermodified nucleoside queuosine (7-(((4,5-cis-dihydroxy-2-cyclopenten-1-yl)amino)methyl)-7-deazaguanosine). This Prochlorococcus marinus (strain MIT 9303) protein is Queuine tRNA-ribosyltransferase.